Here is a 120-residue protein sequence, read N- to C-terminus: NAD(P)H-quinone oxidoreductase subunit 3 (120 aa).

3 consecutive transmembrane segments (helical) span residues 6-26 (GYEY…LALT), 64-84 (MFAL…PWAV), and 89-109 (LGLL…VALA).

It belongs to the complex I subunit 3 family. NDH-1 can be composed of about 15 different subunits; different subcomplexes with different compositions have been identified which probably have different functions.

The protein localises to the cellular thylakoid membrane. It catalyses the reaction a plastoquinone + NADH + (n+1) H(+)(in) = a plastoquinol + NAD(+) + n H(+)(out). It carries out the reaction a plastoquinone + NADPH + (n+1) H(+)(in) = a plastoquinol + NADP(+) + n H(+)(out). In terms of biological role, NDH-1 shuttles electrons from an unknown electron donor, via FMN and iron-sulfur (Fe-S) centers, to quinones in the respiratory and/or the photosynthetic chain. The immediate electron acceptor for the enzyme in this species is believed to be plastoquinone. Couples the redox reaction to proton translocation, and thus conserves the redox energy in a proton gradient. Cyanobacterial NDH-1 also plays a role in inorganic carbon-concentration. The polypeptide is NAD(P)H-quinone oxidoreductase subunit 3 (Prochlorococcus marinus (strain NATL1A)).